The chain runs to 80 residues: Putative membrane protein insertion efficiency factor (80 aa).

Belongs to the UPF0161 family.

Its subcellular location is the cell inner membrane. Its function is as follows. Could be involved in insertion of integral membrane proteins into the membrane. This Picosynechococcus sp. (strain ATCC 27264 / PCC 7002 / PR-6) (Agmenellum quadruplicatum) protein is Putative membrane protein insertion efficiency factor.